Consider the following 1872-residue polypeptide: Ral GTPase-activating protein subunit alpha-2 (1872 aa).

The segment at 350–370 (DGAGSTEQDKSHSNSSTLSDR) is disordered. A phosphoserine mark is found at serine 373, serine 376, and serine 379. Residues 445 to 469 (PDKKDVAQEDADKLGLSETDSKEAS) are compositionally biased toward basic and acidic residues. Residues 445–481 (PDKKDVAQEDADKLGLSETDSKEASSESSGHKRSSSW) form a disordered region. Serine 486 is subject to Phosphoserine. Residue serine 696 is modified to Phosphoserine; by PKB. Disordered regions lie at residues 711–730 (FRSA…NTVR) and 758–813 (QQVP…GITM). The residue at position 715 (threonine 715) is a Phosphothreonine; by PKB. Composition is skewed to polar residues over residues 758–768 (QQVPRSSSTSD) and 775–795 (SDSS…SEPK). A compositionally biased stretch (basic and acidic residues) spans 796 to 810 (SVQESKGHVTHEHEG). Serine 819 and serine 820 each carry phosphoserine. The segment at 831–851 (QQAHGRCRQRQTSESTGSDTV) is disordered. The segment covering 840 to 849 (RQTSESTGSD) has biased composition (polar residues). Residue serine 1592 is modified to Phosphoserine. In terms of domain architecture, Rap-GAP spans 1634-1842 (LKNLDSRQCR…EERALYLEAI (209 aa)).

Component of the heterodimeric RalGAP2 complex with RALGAPB. Heterodimerization is required for activity. Abundantly expressed in testis, pancreas, lung, thymus, brown fat, and white fat.

The protein localises to the cytoplasm. Catalytic subunit of the heterodimeric RalGAP2 complex which acts as a GTPase activator for the Ras-like small GTPases RALA and RALB. This is Ral GTPase-activating protein subunit alpha-2 (Ralgapa2) from Mus musculus (Mouse).